Consider the following 138-residue polypeptide: MEIGYIFILAGFLVIALEAIVPGLYFPAWGIALLIYGVVLLIIPQYAFISAIIAGVLTIIILHKFVYGVGKEIKVGAERFVGMIGIAIEDFEENGYGRIKIENQIWLAKSKDKIKNGDKVEIVGVEGVSLIVKKVEGE.

Helical transmembrane passes span 1 to 21 and 46 to 66; these read MEIG…EAIV and YAFI…HKFV.

The protein localises to the cell membrane. This is an uncharacterized protein from Methanocaldococcus jannaschii (strain ATCC 43067 / DSM 2661 / JAL-1 / JCM 10045 / NBRC 100440) (Methanococcus jannaschii).